Reading from the N-terminus, the 39-residue chain is Basic phospholipase A2 (39 aa).

Ca(2+) contacts are provided by tyrosine 27, glycine 29, and glycine 31.

This sequence belongs to the phospholipase A2 family. Group II subfamily. D49 sub-subfamily. Requires Ca(2+) as cofactor. In terms of tissue distribution, expressed by the venom gland.

The protein localises to the secreted. The enzyme catalyses a 1,2-diacyl-sn-glycero-3-phosphocholine + H2O = a 1-acyl-sn-glycero-3-phosphocholine + a fatty acid + H(+). Its activity is regulated as follows. Is selectively inhibited by the gamma-phospholipase A2 inhibitor (PLI) CgMIP-I (AC P0DQP7) but not by the alpha-PLI CgMIP-II (AC P0DQP8). Its function is as follows. Snake venom phospholipase A2 (PLA2) that shows high myotoxic activities, induces mild edema, and shows cytolytic, and anti-coagulant activities, as well as intracerebral lethal effect. Does not induce lethality at a dose of 5 ug/g, when intravenously injected into mice. PLA2 catalyzes the calcium-dependent hydrolysis of the 2-acyl groups in 3-sn-phosphoglycerides. This chain is Basic phospholipase A2, found in Cerrophidion godmani (Porthidium godmani).